A 32-amino-acid chain; its full sequence is 24 kDa flagellin (32 aa).

The protein belongs to the archaeal flagellin family. In terms of processing, glycosylated.

The protein localises to the archaeal flagellum. Flagellin is the subunit protein which polymerizes to form the filaments of archaeal flagella. The sequence is that of 24 kDa flagellin from Methanospirillum hungatei.